Reading from the N-terminus, the 303-residue chain is Growth/differentiation factor 15 (303 aa).

The N-terminal stretch at 1–30 is a signal peptide; sequence MALRALHAQPTGGPQLRFLLFLLLLLLLLS. Positions 31 to 188 are excised as a propeptide; the sequence is WPSQGDALAL…LRSAAGRGRR (158 aa). An N-linked (GlcNAc...) asparagine glycan is attached at N71. Intrachain disulfides connect C198–C205, C206–C269, C235–C300, and C239–C302.

Belongs to the TGF-beta family. As to quaternary structure, homodimer; disulfide-linked. Interacts with GFRAL and RET; ligand of GFRAL, which mediates GDF15 internalization and cellular signaling through interaction with RET via the formation of a 2:2:2 ternary complex composed of GDF15, GFRAL and RET. As to expression, detected in plasma (at protein level).

Its subcellular location is the secreted. Hormone produced in response to various stresses to confer information about those stresses to the brain, and trigger an aversive response, characterized by nausea and/or loss of appetite. The aversive response is both required to reduce continuing exposure to those stresses at the time of exposure and to promote avoidance behavior in the future. Acts by binding to its receptor, GFRAL, activating GFRAL-expressing neurons localized in the area postrema and nucleus tractus solitarius of the brainstem. It then triggers the activation of neurons localized within the parabrachial nucleus and central amygdala, which constitutes part of the 'emergency circuit' that shapes responses to stressful conditions. The GDF15-GFRAL signal induces expression of genes involved in metabolism, such as lipid metabolism in adipose tissues. Contributes to the effect of metformin, an anti-diabetic drug, on appetite reduction and weight loss: produced in the kidney in response to metformin treatment, thereby activating the GDF15-GFRAL response, leading to reduced appetite and weight. Required for avoidance behavior in response to food allergens: induced downstream of mast cell activation to promote aversion and minimize harmful effects of exposure to noxious substances. Produced in response to anticancer drugs, such as camptothecin or cisplatin, promoting nausea and contributing to malnutrition. Overproduced in many cancers, promoting anorexia in cancer (cachexia). Responsible for the risk of nausea during pregnancy: high levels of GDF15 during pregnancy, mostly originating from embryos, are associated with increased nausea. Maternal sensitivity to nausea is probably determined by pre-pregnancy exposure to GDF15, females with naturally high level of GDF15 being less susceptible to nausea than female rats with low levels of GDF15 before pregnancy. Promotes metabolic adaptation in response to systemic inflammation caused by bacterial and viral infections in order to promote tissue tolerance and prevent tissue damage. Required for tissue tolerance in response to myocardial infarction by acting as an inhibitor of leukocyte integring activation, thereby protecting against cardiac rupture. Inhibits growth hormone signaling on hepatocytes. The chain is Growth/differentiation factor 15 from Rattus norvegicus (Rat).